The following is a 257-amino-acid chain: GTP cyclohydrolase FolE2 (257 aa).

This sequence belongs to the GTP cyclohydrolase IV family.

It catalyses the reaction GTP + H2O = 7,8-dihydroneopterin 3'-triphosphate + formate + H(+). It functions in the pathway cofactor biosynthesis; 7,8-dihydroneopterin triphosphate biosynthesis; 7,8-dihydroneopterin triphosphate from GTP: step 1/1. Converts GTP to 7,8-dihydroneopterin triphosphate. This Dictyoglomus thermophilum (strain ATCC 35947 / DSM 3960 / H-6-12) protein is GTP cyclohydrolase FolE2.